We begin with the raw amino-acid sequence, 249 residues long: MAAGMYLEHYLDSIENLPFELQRNFQLMRDLDQRTEDLKAEIDKLATEYMSSARSLSSEEKLALLRQIQEAYGKCKEFGDDKVQLAMQTYEMVDKHIRRLDTDLARFEADLKEKQIESSDYDSSSSKGKKKGRTQKEKKAARARSKGKNSDEEAPKAAQKKLKLVRTSPEYGMPSVTFGSVHPSDVLDMPVDPNEPTYCLCHQVSYGEMIGCDNPDCSIEWFHFACVGLTTKPRGKWFCPRCSQERKKK.

Residues Phe25–Ser118 adopt a coiled-coil conformation. An N6-acetyllysine mark is found at Lys112, Lys127, and Lys129. Residues Gln115–Lys163 are disordered. The Bipartite nuclear localization signal motif lies at Lys127–Lys148. Arg133 is subject to Citrulline. N6-acetyllysine occurs at positions 146, 148, and 156. Arg166 bears the Citrulline mark. A PHD-type zinc finger spans residues Pro196–Glu245. The Zn(2+) site is built by Cys199, Cys201, Cys212, Cys217, His223, Cys226, Cys239, and Cys242.

The protein belongs to the ING family. In terms of assembly, homodimer. Component of the HBO1 complex composed of KAT7/HBO1, MEAF6, ING4 or ING5, and one scaffold subunit: complexes containing BRPF scaffold (BRPF1, BRD1/BRPF2 or BRPF3) direct KAT7/HBO1 specificity towards H3K14ac, while complexes containing JADE scaffold (JADE1, JADE2 and JADE3) mediate acetylation of histone H4. Interacts with H3K4me3 and to a lesser extent with H3K4me2, the interaction augments KAT7/HBO1 acetylation activity on H3 tails. Interacts with EP300, RELA and TP53; these interactions may be indirect. Interacts with EGLN1. As to quaternary structure, interacts with BCL2A1. Post-translationally, citrullination by PADI4 within the nuclear localization signal disrupts the interaction with p53 and increases susceptibility to degradation. In terms of tissue distribution, isoform 2, isoform 3, isoform 4 and isoform 5 are expressed in the mammary gland, ovary, spleen and muscle. As to expression, expressed in the mammary gland, ovary, spleen and muscle.

Its subcellular location is the nucleus. Functionally, component of HBO1 complexes, which specifically mediate acetylation of histone H3 at 'Lys-14' (H3K14ac), and have reduced activity toward histone H4. Through chromatin acetylation it may function in DNA replication. May inhibit tumor progression by modulating the transcriptional output of signaling pathways which regulate cell proliferation. Can suppress brain tumor angiogenesis through transcriptional repression of RELA/NFKB3 target genes when complexed with RELA. May also specifically suppress loss of contact inhibition elicited by activated oncogenes such as MYC. Represses hypoxia inducible factor's (HIF) activity by interacting with HIF prolyl hydroxylase 2 (EGLN1). Can enhance apoptosis induced by serum starvation in mammary epithelial cell line HC11. This is Inhibitor of growth protein 4 (Ing4) from Mus musculus (Mouse).